The chain runs to 433 residues: Tol-Pal system protein TolB (433 aa).

The first 21 residues, 1-21 (MRNLLRGMLVVICCMAGIVMA), serve as a signal peptide directing secretion.

The protein belongs to the TolB family. In terms of assembly, the Tol-Pal system is composed of five core proteins: the inner membrane proteins TolA, TolQ and TolR, the periplasmic protein TolB and the outer membrane protein Pal. They form a network linking the inner and outer membranes and the peptidoglycan layer.

The protein localises to the periplasm. In terms of biological role, part of the Tol-Pal system, which plays a role in outer membrane invagination during cell division and is important for maintaining outer membrane integrity. This is Tol-Pal system protein TolB from Pseudomonas fluorescens (strain Pf0-1).